A 160-amino-acid polypeptide reads, in one-letter code: Nucleotide-binding protein VV1636 (160 aa).

This sequence belongs to the YajQ family.

Nucleotide-binding protein. The polypeptide is Nucleotide-binding protein VV1636 (Vibrio vulnificus (strain YJ016)).